The primary structure comprises 458 residues: V-type ATP synthase beta chain (458 aa).

It belongs to the ATPase alpha/beta chains family.

Functionally, produces ATP from ADP in the presence of a proton gradient across the membrane. The V-type beta chain is a regulatory subunit. The protein is V-type ATP synthase beta chain of Enterococcus faecalis (strain ATCC 700802 / V583).